We begin with the raw amino-acid sequence, 1582 residues long: Adhesion G protein-coupled receptor B1 (1582 aa).

The signal sequence occupies residues 1 to 33 (MRGQAAAPGPIWILAPLLLLLLLLGRWARAASG). The Extracellular segment spans residues 34 to 948 (ADIGPGTEQC…ATMDKVTVPS (915 aa)). Asn64 is a glycosylation site (N-linked (GlcNAc...) asparagine). In terms of domain architecture, TSP type-1 1 spans 261-315 (AGGWKLWSLWGECTRDCGGGLQTRTRTCLPTLGVEGGGCEGVLEEGRLCNRKACG). 3 disulfide bridges follow: Cys273-Cys309, Cys277-Cys314, and Cys288-Cys299. The interval 313 to 335 (ACGPTGRSSSRSQSLRSTDARRR) is disordered. The segment covering 319–329 (RSSSRSQSLRS) has biased composition (low complexity). 4 consecutive TSP type-1 domains span residues 354–407 (DPAA…AVCP), 409–462 (HGAW…ALCP), 467–520 (DGNW…QQCP), and 522–575 (DGKW…QRCP). Cystine bridges form between Cys366–Cys400, Cys370–Cys406, Cys381–Cys390, Cys421–Cys456, Cys425–Cys461, Cys436–Cys446, Cys479–Cys514, Cys483–Cys519, Cys494–Cys504, Cys534–Cys569, Cys538–Cys574, Cys549–Cys559, Cys581–Cys616, and Cys604–Cys634. N-linked (GlcNAc...) asparagine glycosylation occurs at Asn401. Asn607 carries N-linked (GlcNAc...) asparagine glycosylation. A Phosphothreonine modification is found at Thr609. 4 N-linked (GlcNAc...) asparagine glycosylation sites follow: Asn692, Asn844, Asn877, and Asn881. In terms of domain architecture, GAIN-B spans 760 to 939 (RDAYQVTDNL…AILAQLSADA (180 aa)). Intrachain disulfides connect Cys884-Cys921 and Cys909-Cys923. Positions 884 to 939 (CILWDETDGPSSSAPPQLGPWSWRGCRTVPLDALRTRCLCDRLSTFAILAQLSADA) are GPS. The N-terminal stalk following vasculostatin-120 cleavage which is not required for signaling activity stretch occupies residues 927-943 (STFAILAQLSADATMDK). Residues 949-969 (VTLIVGCGVSSLTLLMLVIIY) form a helical membrane-spanning segment. Residues 970–980 (VSVWRYIRSER) are Cytoplasmic-facing. A helical transmembrane segment spans residues 981–1001 (SVILINFCLSIISSNALILIG). At 1002–1008 (QTQTRNK) the chain is on the extracellular side. The helical transmembrane segment at 1009–1029 (VVCTLVAAFLHFFFLSSFCWV) threads the bilayer. Topologically, residues 1030–1052 (LTEAWQSYMAVTGRLRSRLVRKR) are cytoplasmic. Residues 1053-1073 (FLCLGWGLPALVVAISVGFTK) traverse the membrane as a helical segment. The Extracellular portion of the chain corresponds to 1074 to 1093 (AKGYSTMNYCWLSLEGGLLY). A helical membrane pass occupies residues 1094-1114 (AFVGPAAAVVLVNMVIGILVF). Residues 1115-1136 (NKLVSKDGITDKKLKERAGASL) lie on the Cytoplasmic side of the membrane. Residues 1137–1157 (WSSCVVLPLLALTWMSAVLAV) traverse the membrane as a helical segment. Topologically, residues 1158 to 1166 (TDRRSALFQ) are extracellular. A helical membrane pass occupies residues 1167–1187 (ILFAVFDSLEGFVIVMVHCIL). Over 1188–1582 (RREVQDAVKC…QDIIDLQTEV (395 aa)) the chain is Cytoplasmic. An involved in interaction with MAGI1 region spans residues 1363–1582 (YSINIDQMPQ…QDIIDLQTEV (220 aa)). The disordered stretch occupies residues 1382–1549 (PDASFPTRSP…AWVKKELEPL (168 aa)). A compositionally biased stretch (pro residues) spans 1389–1435 (RSPPAREPPGGAPPEVPPVQPPPPPPPPPPPPQQPIPPPPTLEPAPP). Positions 1441–1455 (GEPAAHPGPSSGAGA) are enriched in low complexity. Ser1467 is modified (phosphoserine). 2 stretches are compositionally biased toward basic and acidic residues: residues 1468 to 1484 (LERR…EKIM) and 1491 to 1520 (QDMF…KPEK). Positions 1579–1582 (QTEV) are indispensable for interaction with MAGI1.

The protein belongs to the G-protein coupled receptor 2 family. LN-TM7 subfamily. As to quaternary structure, interacts with ELMO1 and DOCK1. When bound to ELMO1 and DOCK1, acts as a module to promote apoptotic cell engulfment. Interacts with MDM2; the interaction results in inhibition of MDM2-mediated ubiquitination and degradation of DLG4/PSD95. Interacts with PARD3 and TIAM1; the interaction is required for correct dendritic localization of PARD3 and TIAM1 and for dendritic spine formation. Interacts with MAGI1, MAGI3 and BAIAP2. Interacts with PHYHIP. Interacts with DLG4 (via PDZ domain). Vasculostatin-120: Interacts with CD36. Vasculostatin-120: Interacts with ARRB2. Interacts with BAIAP3; this interaction is direct. Proteolytically cleaved to produce vasculostatin-40 and vasculostatin-120. Vasculostatin-40 is the major form and is produced through proteolytic cleavage by MMP14 between residues 321 and 329 with cleavage likely to be between Ser-326 and Leu-327. In terms of processing, ubiquitinated. In brain, widespread expression in all neuropil-rich zones including spinal cord gray matter, cerebellar molecular layer, cerebral cortex, thalamic nuclei and basal ganglia with no expression in white matter (at protein level). In the cerebellar molecular layer, highly expressed in interneuron processes whereas Purkinje cells and their dendrites show weaker expression (at protein level). In the olfactory bulb, highly expressed in glomeruli (at protein level). In the retina, highly concentrated in the outer and inner plexiform layers (at protein level). Expressed in brain. Enriched in hippocampus and cortex. Also detected in other tissues including bone marrow and spleen.

It localises to the cell membrane. Its subcellular location is the cell projection. The protein localises to the phagocytic cup. It is found in the cell junction. The protein resides in the focal adhesion. It localises to the dendritic spine. Its subcellular location is the postsynaptic density. The protein localises to the secreted. Phosphatidylserine receptor which enhances the engulfment of apoptotic cells. Also mediates the binding and engulfment of Gram-negative bacteria. Stimulates production of reactive oxygen species by macrophages in response to Gram-negative bacteria, resulting in enhanced microbicidal macrophage activity. In the gastric mucosa, required for recognition and engulfment of apoptotic gastric epithelial cells. Promotes myoblast fusion. Activates the Rho pathway in a G-protein-dependent manner. Inhibits MDM2-mediated ubiquitination and degradation of DLG4/PSD95, promoting DLG4 stability and regulating synaptic plasticity. Required for the formation of dendritic spines by ensuring the correct localization of PARD3 and TIAM1. Potent inhibitor of angiogenesis in brain and may play a significant role as a mediator of the p53/TP53 signal in suppression of glioblastoma. In terms of biological role, inhibits angiogenesis in a CD36-dependent manner. Its function is as follows. Inhibits angiogenesis. This chain is Adhesion G protein-coupled receptor B1, found in Mus musculus (Mouse).